Consider the following 318-residue polypeptide: Pheromone-regulated membrane protein 5 (318 aa).

The tract at residues 15–56 (TTSTSSTTTASSSSTITSVXSSSSSLPLLSNSTSSSIIPSIT) is disordered. Residues 78-98 (FIVVGGIAGVIFLAILLWWVI) form a helical membrane-spanning segment. The residue at position 129 (serine 129) is a Phosphoserine. The segment covering 238 to 247 (TISSSSASSL) has biased composition (low complexity). A disordered region spans residues 238–318 (TISSSSASSL…HMLEGKEQDE (81 aa)). Residues 250-261 (GNEKEVGEDIRK) are compositionally biased toward basic and acidic residues. A compositionally biased stretch (polar residues) spans 276-285 (SPESDGSVNR). 3 positions are modified to phosphoserine: serine 279, serine 282, and serine 288. Residues 309 to 318 (HMLEGKEQDE) are compositionally biased toward basic and acidic residues. A Glycyl lysine isopeptide (Lys-Gly) (interchain with G-Cter in ubiquitin) cross-link involves residue lysine 314.

Belongs to the PRM5 family.

It is found in the membrane. This is Pheromone-regulated membrane protein 5 (PRM5) from Saccharomyces cerevisiae (strain Lalvin QA23) (Baker's yeast).